The chain runs to 621 residues: Acetolactate synthase (621 aa).

Positions 1 to 19 (MSAPTRRPAPDAPGAAGIA) are enriched in low complexity. Residues 1-39 (MSAPTRRPAPDAPGAAGIAPAPPAPAAKPAAGKPKRIGP) are disordered. E89 serves as a coordination point for thiamine diphosphate. FAD contacts are provided by residues R190, 296–317 (HGTV…LGTR), and 339–358 (DIDP…IVGD). Residues 432 to 512 (HDQMWAAQFI…IKVALINNGN (81 aa)) are thiamine pyrophosphate binding. Residues D483 and N510 each contribute to the Mg(2+) site.

Belongs to the TPP enzyme family. The cofactor is Mg(2+). Requires thiamine diphosphate as cofactor.

The enzyme catalyses 2 pyruvate + H(+) = (2S)-2-acetolactate + CO2. Its pathway is amino-acid biosynthesis; L-isoleucine biosynthesis; L-isoleucine from 2-oxobutanoate: step 1/4. The protein operates within amino-acid biosynthesis; L-valine biosynthesis; L-valine from pyruvate: step 1/4. This Mycobacterium avium protein is Acetolactate synthase (ilvB).